A 253-amino-acid chain; its full sequence is uncharacterized protein (253 aa).

A compositionally biased stretch (low complexity) spans 1–14; sequence MKVPILSRLRSLSS. Disordered stretches follow at residues 1 to 192 and 212 to 253; these read MKVP…PKSS and PETV…AIQL. Composition is skewed to basic and acidic residues over residues 17–30 and 45–60; these read RNNE…EHQV and KSDK…KSGE. Composition is skewed to low complexity over residues 63–104 and 111–154; these read PSTP…GSDS and KTLS…QTPR. Residues 215-235 show a composition bias toward polar residues; sequence VVTSTPRQQSRPPSAQNTPNF. Residues 236-253 show a composition bias toward low complexity; the sequence is TSQGGSRSTSRRQSAIQL.

This is an uncharacterized protein from Dictyostelium discoideum (Social amoeba).